We begin with the raw amino-acid sequence, 145 residues long: Sperm mitochondrial-associated cysteine-rich protein (145 aa).

Phosphoserine occurs at positions 38, 45, 113, and 131. Residues 105-145 (CSSENKTESDSDGSGQTQDRGAQTQQSPQGGQGNWNQKKTK) form a disordered region. The segment covering 116-145 (DGSGQTQDRGAQTQQSPQGGQGNWNQKKTK) has biased composition (polar residues).

In terms of tissue distribution, testis. Selectively expressed in the spermatids of seminiferous tubules and in flagella of epididymal sperm.

The protein resides in the cytoplasm. It is found in the mitochondrion membrane. Functionally, involved in sperm motility. Its absence is associated with genetic background dependent male infertility. Infertility may be due to reduced sperm motility in the female reproductive tract and inability to penetrate the oocyte zona pellucida. The protein is Sperm mitochondrial-associated cysteine-rich protein (Smcp) of Rattus norvegicus (Rat).